Reading from the N-terminus, the 509-residue chain is Maturase K (509 aa).

Belongs to the intron maturase 2 family. MatK subfamily.

It is found in the plastid. The protein localises to the chloroplast. Functionally, usually encoded in the trnK tRNA gene intron. Probably assists in splicing its own and other chloroplast group II introns. This is Maturase K from Nicotiana rustica (Aztec tobacco).